We begin with the raw amino-acid sequence, 306 residues long: Serine/threonine-protein phosphatase PP2A-2 catalytic subunit (306 aa).

Residues aspartate 54, histidine 56, aspartate 82, and asparagine 114 each coordinate Mn(2+). Residue histidine 115 is the Proton donor of the active site. Mn(2+) contacts are provided by histidine 164 and histidine 238. Leucine 306 carries the post-translational modification Leucine methyl ester.

Belongs to the PPP phosphatase family. PP-2A subfamily. PP2A consists of a common heterodimeric core enzyme, composed of a 36 kDa catalytic subunit (subunit C) and a 65 kDa constant regulatory subunit (subunit A), that associates with a variety of regulatory subunits such as subunits B (the R2/B/PR55/B55, R3/B''/PR72/PR130/PR59 and R5/B'/B56 families). Interacts with B'THETA. Interacts with HDA14. Interacts with SRK2E/OST1. Interacts with TAP46. The cofactor is Mn(2+). In terms of processing, reversibly methyl esterified on Leu-306 by leucine carboxyl methyltransferase 1 (LCMT1) and pectin methylesterase 1 (PME1). Carboxyl methylation influences the affinity of the catalytic subunit for the different regulatory subunits, thereby modulating the PP2A holoenzyme's substrate specificity, enzyme activity and cellular localization. Phosphorylation of either threonine (by autophosphorylation-activated protein kinase) or tyrosine results in inactivation of the phosphatase. Auto-dephosphorylation has been suggested as a mechanism for reactivation. As to expression, expressed in root meristem, emerging lateral roots, leaf vasculature, stipules, guard cells, anthers and pollen grains.

Its subcellular location is the cytoplasm. It is found in the cytosol. The protein localises to the nucleus. It localises to the peroxisome. The enzyme catalyses O-phospho-L-seryl-[protein] + H2O = L-seryl-[protein] + phosphate. It catalyses the reaction O-phospho-L-threonyl-[protein] + H2O = L-threonyl-[protein] + phosphate. Its function is as follows. Dephosphorylates and activates the actin-depolymerizing factor ADF1, which, in turn, regulates actin cytoskeleton remodeling and is involved in the blue light photoreceptor PHOT2-mediated chloroplast avoidance movements. Associates with the serine/threonine-protein phosphatase PP2A regulatory subunits A and B' to positively regulates beta-oxidation of fatty acids and protoauxins in peroxisomes by dephosphorylating peroxisomal beta-oxidation-related proteins. Acts as a negative regulator of abscisic acid (ABA) signaling. May regulate ABA-dependent gene expression. Involved in the light-dependent activation of nitrate reductase. This Arabidopsis thaliana (Mouse-ear cress) protein is Serine/threonine-protein phosphatase PP2A-2 catalytic subunit.